The chain runs to 366 residues: MLIWLVELADHFQFFNLFRYITFRTGAALFTSALIVFLFGPAIISSLRIRQGKGQPIRADGPQTHFKKAGTPTMGGLMILAGIVGSALLWADLSSIYVVSTLLVTLGFGAIGFYDDYLKVTKQSDKGFSGKARLGIEFVIAAIAVFFMMQAAQSAGSAGSTFGSSVTFPFFKDLMLNLGYFFVLFGGFVIVGAGNAVNLTDGLDGLAIVPVMIASAAFGLIAYLAGNAVFANYLQIHFVPGTGELAVILGAVIGAGLGFLWFNAPPAAIFMGDTGSLALGGLIGTVAVATKHEIVMVIIGGLFVIETLSVIIQVFWFKRTGRRVFLMAPIHHHFEKKGWTESQVVIRFWIIAVILAMVGLSTLKLR.

The next 10 membrane-spanning stretches (helical) occupy residues 27–47 (AALF…ISSL), 71–91 (TPTM…LLWA), 93–113 (LSSI…AIGF), 134–154 (LGIE…AAQS), 174–194 (LMLN…VGAG), 205–225 (GLAI…AYLA), 245–265 (LAVI…FNAP), 268–288 (AIFM…TVAV), 297–317 (VIIG…VFWF), and 343–363 (QVVI…LSTL).

The protein belongs to the glycosyltransferase 4 family. MraY subfamily. It depends on Mg(2+) as a cofactor.

Its subcellular location is the cell inner membrane. It carries out the reaction UDP-N-acetyl-alpha-D-muramoyl-L-alanyl-gamma-D-glutamyl-meso-2,6-diaminopimeloyl-D-alanyl-D-alanine + di-trans,octa-cis-undecaprenyl phosphate = di-trans,octa-cis-undecaprenyl diphospho-N-acetyl-alpha-D-muramoyl-L-alanyl-D-glutamyl-meso-2,6-diaminopimeloyl-D-alanyl-D-alanine + UMP. It functions in the pathway cell wall biogenesis; peptidoglycan biosynthesis. Functionally, catalyzes the initial step of the lipid cycle reactions in the biosynthesis of the cell wall peptidoglycan: transfers peptidoglycan precursor phospho-MurNAc-pentapeptide from UDP-MurNAc-pentapeptide onto the lipid carrier undecaprenyl phosphate, yielding undecaprenyl-pyrophosphoryl-MurNAc-pentapeptide, known as lipid I. In Sinorhizobium fredii (strain NBRC 101917 / NGR234), this protein is Phospho-N-acetylmuramoyl-pentapeptide-transferase.